The following is a 548-amino-acid chain: Glucose-6-phosphate isomerase (548 aa).

Glutamate 355 (proton donor) is an active-site residue. Residues histidine 386 and lysine 514 contribute to the active site.

The protein belongs to the GPI family.

The protein resides in the cytoplasm. The catalysed reaction is alpha-D-glucose 6-phosphate = beta-D-fructose 6-phosphate. Its pathway is carbohydrate biosynthesis; gluconeogenesis. It participates in carbohydrate degradation; glycolysis; D-glyceraldehyde 3-phosphate and glycerone phosphate from D-glucose: step 2/4. Functionally, catalyzes the reversible isomerization of glucose-6-phosphate to fructose-6-phosphate. The polypeptide is Glucose-6-phosphate isomerase (Proteus mirabilis (strain HI4320)).